The chain runs to 127 residues: SpiC homolog (127 aa).

Functionally, putative virulence protein. The protein is SpiC homolog (spiC) of Salmonella typhi.